A 283-amino-acid polypeptide reads, in one-letter code: MMMGKEDLGLSLSLGFSQNHNPLQMNLNPNSSLSNNLQRLPWNQTFDPTSDLRKIDVNSFPSTVNCEEDTGVSSPNSTISSTISGKRSEREGISGTGVGSGDDHDEITPDRGYSRGTSDEEEDGGETSRKKLRLSKDQSAFLEETFKEHNTLNPKQKLALAKKLNLTARQVEVWFQNRRARTKLKQTEVDCEYLKRCVEKLTEENRRLQKEAMELRTLKLSPQFYGQMTPPTTLIMCPSCERVGGPSSSNHHHNHRPVSINPWVACAGQVAHGLNFEALRPRS.

The segment at 64-134 (VNCEEDTGVS…GETSRKKLRL (71 aa)) is disordered. Low complexity predominate over residues 73 to 84 (SSPNSTISSTIS). Residues 127–186 (TSRKKLRLSKDQSAFLEETFKEHNTLNPKQKLALAKKLNLTARQVEVWFQNRRARTKLKQ) constitute a DNA-binding region (homeobox). Positions 194–215 (LKRCVEKLTEENRRLQKEAMEL) are leucine-zipper.

The protein belongs to the HD-ZIP homeobox family. Class II subfamily. Interacts with RBR1.

It is found in the nucleus. Functionally, probable transcription factor that plays a role in auxin-mediated morphogenesis. Negatively regulates lateral root elongation. The chain is Homeobox-leucine zipper protein HAT2 (HAT2) from Arabidopsis thaliana (Mouse-ear cress).